A 91-amino-acid chain; its full sequence is Histone H1, sperm (91 aa).

The interval 1-25 (PGSPQKRAASPRKSPRKGSPKKSPM) is disordered. A compositionally biased stretch (basic residues) spans 9 to 20 (ASPRKSPRKGSP). The H15 domain maps to 18-91 (GSPKKSPMIR…TGATGRFRVG (74 aa)).

The protein belongs to the histone H1/H5 family.

The protein resides in the nucleus. It localises to the chromosome. Histones H1 are necessary for the condensation of nucleosome chains into higher-order structures. This Sphaerechinus granularis (Purple sea urchin) protein is Histone H1, sperm.